Reading from the N-terminus, the 863-residue chain is DNA gyrase subunit A (863 aa).

Residues 37–500 (LPDARDGLKP…DYDDIDIEDL (464 aa)) form the Topo IIA-type catalytic domain. Residue Tyr125 is the O-(5'-phospho-DNA)-tyrosine intermediate of the active site. A GyrA-box motif is present at residues 527-533 (QKRGGKG).

Belongs to the type II topoisomerase GyrA/ParC subunit family. Heterotetramer, composed of two GyrA and two GyrB chains. In the heterotetramer, GyrA contains the active site tyrosine that forms a transient covalent intermediate with DNA, while GyrB binds cofactors and catalyzes ATP hydrolysis.

The protein localises to the cytoplasm. It carries out the reaction ATP-dependent breakage, passage and rejoining of double-stranded DNA.. In terms of biological role, a type II topoisomerase that negatively supercoils closed circular double-stranded (ds) DNA in an ATP-dependent manner to modulate DNA topology and maintain chromosomes in an underwound state. Negative supercoiling favors strand separation, and DNA replication, transcription, recombination and repair, all of which involve strand separation. Also able to catalyze the interconversion of other topological isomers of dsDNA rings, including catenanes and knotted rings. Type II topoisomerases break and join 2 DNA strands simultaneously in an ATP-dependent manner. This is DNA gyrase subunit A from Campylobacter jejuni subsp. jejuni serotype O:2 (strain ATCC 700819 / NCTC 11168).